The sequence spans 397 residues: Cathepsin E (397 aa).

The N-terminal stretch at 1–16 (MKQFLVVLLILSFVHG) is a signal peptide. The propeptide at 17-49 (IIRVPLKRQKSMRKILKEKGKLSHLWTKQGNEF) is activation peptide. Residues 74 to 385 (YFGQISIGTP…DRGNNRVGFA (312 aa)) enclose the Peptidase A1 domain. Asp92 is a catalytic residue. Cysteines 105 and 110 form a disulfide. N-linked (GlcNAc...) asparagine glycosylation occurs at Asn139. The cysteines at positions 268 and 272 are disulfide-linked. Asp277 is a catalytic residue. An intrachain disulfide couples Cys310 to Cys344.

This sequence belongs to the peptidase A1 family. As to quaternary structure, homodimer; disulfide-linked. Glycosylated. Contains high mannose-type oligosaccharide. Found in the larval foregut and adult stomach.

It localises to the endosome. The catalysed reaction is Similar to cathepsin D, but slightly broader specificity.. In terms of biological role, may have a role in immune function. Probably involved in the processing of antigenic peptides during MHC class II-mediated antigen presentation. This chain is Cathepsin E (CTSE), found in Aquarana catesbeiana (American bullfrog).